A 351-amino-acid polypeptide reads, in one-letter code: DNA polymerase IV (351 aa).

The 181-residue stretch at 4-184 (FIHIDMDCFY…LPLGKIPGVG (181 aa)) folds into the UmuC domain. Residues D8 and D102 each contribute to the Mg(2+) site. Residue E103 is part of the active site.

Belongs to the DNA polymerase type-Y family. In terms of assembly, monomer. Requires Mg(2+) as cofactor.

It localises to the cytoplasm. The catalysed reaction is DNA(n) + a 2'-deoxyribonucleoside 5'-triphosphate = DNA(n+1) + diphosphate. Functionally, poorly processive, error-prone DNA polymerase involved in untargeted mutagenesis. Copies undamaged DNA at stalled replication forks, which arise in vivo from mismatched or misaligned primer ends. These misaligned primers can be extended by PolIV. Exhibits no 3'-5' exonuclease (proofreading) activity. May be involved in translesional synthesis, in conjunction with the beta clamp from PolIII. The polypeptide is DNA polymerase IV (Pseudoalteromonas translucida (strain TAC 125)).